The following is a 508-amino-acid chain: Amphoterin-induced protein 3 (508 aa).

An N-terminal signal peptide occupies residues 1 to 19 (MAWLVLSGILLCMLGAGLG). At 20–383 (TSDLEDVLPP…ARPEPETFNT (364 aa)) the chain is on the extracellular side. In terms of domain architecture, LRRNT spans 25–61 (DVLPPAPHNCPDICICAADVLSCAGRGLQDLPVALPT). 2 cysteine pairs are disulfide-bonded: C34–C40 and C38–C47. LRR repeat units lie at residues 62-83 (TAAE…WLAP), 86-107 (RLRA…AFTN), 110-133 (GLRT…DGLE), 134-155 (ELEK…AFQG), 158-178 (MLSH…NHLH), and 184-207 (RLRT…AALP). The N-linked (GlcNAc...) asparagine glycan is linked to N107. N142 carries an N-linked (GlcNAc...) asparagine glycan. In terms of domain architecture, LRRCT spans 219–275 (NPLPCDCSLYHLLRRWHQRGLSALHDFEREYTCLVFKVSESRVRFFEHSRVFKNCSV). 3 disulfides stabilise this stretch: C223-C251, C225-C273, and C300-C352. N272, N301, N362, and N368 each carry an N-linked (GlcNAc...) asparagine glycan. An Ig-like C2-type domain is found at 279–370 (PGLELPEEQL…HNQTLEYNVS (92 aa)). The helical transmembrane segment at 384 to 404 (GFTTLLGCIVGLVLVLLYLFA) threads the bilayer. At 405–508 (PPCRGCCHCC…STGSEGLVMS (104 aa)) the chain is on the cytoplasmic side.

It belongs to the immunoglobulin superfamily. AMIGO family. In terms of assembly, binds AMIGO1 or AMIGO2. As to expression, ubiquitous.

Its subcellular location is the membrane. In terms of biological role, may mediate heterophilic cell-cell interaction. May contribute to signal transduction through its intracellular domain. In Mus musculus (Mouse), this protein is Amphoterin-induced protein 3.